Reading from the N-terminus, the 128-residue chain is L-ectoine synthase (128 aa).

Belongs to the ectoine synthase family.

It catalyses the reaction (2S)-4-acetamido-2-aminobutanoate = L-ectoine + H2O. It functions in the pathway amine and polyamine biosynthesis; ectoine biosynthesis; L-ectoine from L-aspartate 4-semialdehyde: step 3/3. Catalyzes the circularization of gamma-N-acetyl-alpha,gamma-diaminobutyric acid (ADABA) to ectoine (1,4,5,6-tetrahydro-2-methyl-4-pyrimidine carboxylic acid), which is an excellent osmoprotectant. The protein is L-ectoine synthase of Vibrio parahaemolyticus serotype O3:K6 (strain RIMD 2210633).